The primary structure comprises 1400 residues: DNA-directed RNA polymerase subunit beta' (1400 aa).

The Zn(2+) site is built by cysteine 71, cysteine 73, cysteine 86, and cysteine 89. Residues aspartate 462, aspartate 464, and aspartate 466 each coordinate Mg(2+). Zn(2+) contacts are provided by cysteine 810, cysteine 884, cysteine 891, and cysteine 894.

This sequence belongs to the RNA polymerase beta' chain family. As to quaternary structure, the RNAP catalytic core consists of 2 alpha, 1 beta, 1 beta' and 1 omega subunit. When a sigma factor is associated with the core the holoenzyme is formed, which can initiate transcription. The cofactor is Mg(2+). It depends on Zn(2+) as a cofactor.

The catalysed reaction is RNA(n) + a ribonucleoside 5'-triphosphate = RNA(n+1) + diphosphate. DNA-dependent RNA polymerase catalyzes the transcription of DNA into RNA using the four ribonucleoside triphosphates as substrates. In Rhodopseudomonas palustris (strain TIE-1), this protein is DNA-directed RNA polymerase subunit beta'.